A 1237-amino-acid polypeptide reads, in one-letter code: Mediator of RNA polymerase II transcription subunit 5 (1237 aa).

2 disordered regions span residues 1109-1131 and 1202-1226; these read DDEP…TSNA and HGAQ…ADSG. Residues 1119–1131 show a composition bias toward low complexity; the sequence is HAAANATSHTSNA.

The protein belongs to the Mediator complex subunit 5 family. As to quaternary structure, component of the Mediator complex.

The protein resides in the nucleus. In terms of biological role, component of the Mediator complex, a coactivator involved in the regulated transcription of nearly all RNA polymerase II-dependent genes. Mediator functions as a bridge to convey information from gene-specific regulatory proteins to the basal RNA polymerase II transcription machinery. Mediator is recruited to promoters by direct interactions with regulatory proteins and serves as a scaffold for the assembly of a functional preinitiation complex with RNA polymerase II and the general transcription factors. The sequence is that of Mediator of RNA polymerase II transcription subunit 5 (NUT1) from Mycosarcoma maydis (Corn smut fungus).